We begin with the raw amino-acid sequence, 714 residues long: ATP-dependent DNA helicase DinG (714 aa).

Residues 17–294 enclose the Helicase ATP-binding domain; that stretch reads ALQDQIPDFI…TCMEQFRPKT (278 aa). 54 to 61 provides a ligand contact to ATP; sequence APTGVGKT. Residues Cys120, Cys194, Cys199, and Cys205 each contribute to the [4Fe-4S] cluster site. The DEAH box motif lies at 248–251; that stretch reads DEGH. The Helicase C-terminal domain occupies 517–698; the sequence is HIAEMAAYFR…VFPIEQPAVP (182 aa).

Belongs to the helicase family. DinG subfamily. Type 1 sub-subfamily. [4Fe-4S] cluster is required as a cofactor.

It catalyses the reaction Couples ATP hydrolysis with the unwinding of duplex DNA at the replication fork by translocating in the 5'-3' direction. This creates two antiparallel DNA single strands (ssDNA). The leading ssDNA polymer is the template for DNA polymerase III holoenzyme which synthesizes a continuous strand.. The catalysed reaction is ATP + H2O = ADP + phosphate + H(+). DNA-dependent ATPase and 5'-3' DNA helicase. Unwinds D-loops, R-loops, forked DNA and G-quadruplex DNA. This is ATP-dependent DNA helicase DinG from Salmonella typhimurium (strain LT2 / SGSC1412 / ATCC 700720).